Here is a 507-residue protein sequence, read N- to C-terminus: Subtilisin-like protease 1 (507 aa).

A signal peptide spans 1–19; that stretch reads MGVFRFISISLAAVSAANA. The propeptide occupies 20–116; the sequence is AQILSMPHAQ…VEPDTIISVN (97 aa). Residues 34–113 enclose the Inhibitor I9 domain; that stretch reads SYIVMMKDDT…VMFVEPDTII (80 aa). The 275-residue stretch at 126–400 folds into the Peptidase S8 domain; sequence SWGLARISNS…NVLISNGGAK (275 aa). Residues aspartate 158 and histidine 190 each act as charge relay system in the active site. The interval 175–198 is disordered; the sequence is GSNQVNDGDDRDGSGHGTHTSGTM. Residue asparagine 251 is glycosylated (N-linked (GlcNAc...) asparagine). Residues 282–294 are compositionally biased toward polar residues; the sequence is NENQDARSSSPAS. Residues 282 to 312 form a disordered region; that stretch reads NENQDARSSSPASEPSVCTVGSSAEDDSRSS. The Charge relay system role is filled by serine 345. The segment covering 378 to 394 has biased composition (polar residues); it reads SSSITDVGPGTPTNVLI. Positions 378-486 are disordered; that stretch reads SSSITDVGPG…YPGGDNFDFD (109 aa). Pro residues-rich tracts occupy residues 405–428 and 438–449; these read KPAPGPSPNPSQPSEPQQPAPSQP and EPFPGEPFPGEP. The span at 450-461 shows a compositional bias: low complexity; the sequence is FPGESSPGESAP. Positions 462–476 are enriched in pro residues; that stretch reads APAPMPPSPQHPHTP.

This sequence belongs to the peptidase S8 family.

The protein resides in the secreted. Its function is as follows. Secreted subtilisin-like serine protease with keratinolytic activity that contributes to pathogenicity. This Trichophyton tonsurans (Scalp ringworm fungus) protein is Subtilisin-like protease 1 (SUB1).